The following is a 481-amino-acid chain: 2-succinylbenzoate--CoA ligase (481 aa).

It belongs to the ATP-dependent AMP-binding enzyme family. MenE subfamily.

The catalysed reaction is 2-succinylbenzoate + ATP + CoA = 2-succinylbenzoyl-CoA + AMP + diphosphate. Its pathway is quinol/quinone metabolism; 1,4-dihydroxy-2-naphthoate biosynthesis; 1,4-dihydroxy-2-naphthoate from chorismate: step 5/7. It functions in the pathway quinol/quinone metabolism; menaquinone biosynthesis. In terms of biological role, converts 2-succinylbenzoate (OSB) to 2-succinylbenzoyl-CoA (OSB-CoA). The sequence is that of 2-succinylbenzoate--CoA ligase from Bacillus cytotoxicus (strain DSM 22905 / CIP 110041 / 391-98 / NVH 391-98).